Reading from the N-terminus, the 513-residue chain is MQLNSTEIAELIKQRIAQFDVKSEARNEGTIVSVSDGIIRIHGLADAMQGEMIELPGNRFALALNLERDSVGAVIMGSYDGLSEGMKVKGTGRILEVPVGRGLLGRVLNTLGQPIDGKGPVENDGFSPIEVIAPGVIERKSVDQPVQTGLKAIDAMIPIGRGQRELIIGDRQVGKTAIAIDTIINQKDSGIKCVYVAIGQKASTIANVVRKLEEHGALANTIVVVASASEAAALQYLAPYAGCSMGEYFRDRGEDALIIYDDLSKQAVAYRQISLLLRRPPGREAYPGDVFYLHSRLLERAARVNAEYVEKFTNGAVKGQTGSLTALPIIETQAGDVSAFVPTNVISITDGQIFLTSQLFNSGIRPAVDPGISVSRVGGAAQTKIVKKLSGGIRTALAQYRELAAFAQFSSDLDEATRKQLDHGVKVTELMKQKQYSPMSVAQQSLVLFAAEKGYLSDVELNKIVDFEAALLSYANTQHAELMAEINAKADYNDAIVGKLTALLDDFKATQTW.

169–176 (GDRQVGKT) contacts ATP.

Belongs to the ATPase alpha/beta chains family. In terms of assembly, F-type ATPases have 2 components, CF(1) - the catalytic core - and CF(0) - the membrane proton channel. CF(1) has five subunits: alpha(3), beta(3), gamma(1), delta(1), epsilon(1). CF(0) has three main subunits: a(1), b(2) and c(9-12). The alpha and beta chains form an alternating ring which encloses part of the gamma chain. CF(1) is attached to CF(0) by a central stalk formed by the gamma and epsilon chains, while a peripheral stalk is formed by the delta and b chains.

It localises to the cell inner membrane. It catalyses the reaction ATP + H2O + 4 H(+)(in) = ADP + phosphate + 5 H(+)(out). In terms of biological role, produces ATP from ADP in the presence of a proton gradient across the membrane. The alpha chain is a regulatory subunit. This Aeromonas salmonicida (strain A449) protein is ATP synthase subunit alpha.